The chain runs to 324 residues: Adenine deaminase (324 aa).

The Zn(2+) site is built by His-11, His-13, and His-189. Glu-192 serves as the catalytic Proton donor. Asp-270 provides a ligand contact to Zn(2+). Residue Asp-271 participates in substrate binding.

It belongs to the metallo-dependent hydrolases superfamily. Adenosine and AMP deaminases family. Adenine deaminase type 2 subfamily. The cofactor is Zn(2+).

The enzyme catalyses adenine + H2O + H(+) = hypoxanthine + NH4(+). Functionally, catalyzes the hydrolytic deamination of adenine to hypoxanthine. Plays an important role in the purine salvage pathway and in nitrogen catabolism. The sequence is that of Adenine deaminase from Rhizobium meliloti (strain 1021) (Ensifer meliloti).